The sequence spans 328 residues: Tetraacyldisaccharide 4'-kinase (328 aa).

55–62 (TAGGNGKT) contributes to the ATP binding site.

It belongs to the LpxK family.

It carries out the reaction a lipid A disaccharide + ATP = a lipid IVA + ADP + H(+). It participates in glycolipid biosynthesis; lipid IV(A) biosynthesis; lipid IV(A) from (3R)-3-hydroxytetradecanoyl-[acyl-carrier-protein] and UDP-N-acetyl-alpha-D-glucosamine: step 6/6. Transfers the gamma-phosphate of ATP to the 4'-position of a tetraacyldisaccharide 1-phosphate intermediate (termed DS-1-P) to form tetraacyldisaccharide 1,4'-bis-phosphate (lipid IVA). The polypeptide is Tetraacyldisaccharide 4'-kinase (Escherichia coli O127:H6 (strain E2348/69 / EPEC)).